A 226-amino-acid polypeptide reads, in one-letter code: Translation initiation factor 6 (226 aa).

Belongs to the eIF-6 family.

Functionally, binds to the 50S ribosomal subunit and prevents its association with the 30S ribosomal subunit to form the 70S initiation complex. This chain is Translation initiation factor 6, found in Haloquadratum walsbyi (strain DSM 16790 / HBSQ001).